The following is a 361-amino-acid chain: Carbon monoxide-induced hydrogenase (361 aa).

Ni(2+)-binding residues include Cys64, Cys67, Cys355, and Cys358.

This sequence to E.coli formate hydrogenlyase hydrogenase isozyme 3 and to bovine mitochondrial NADH-ubiquinone oxidoreductase. Ni(2+) serves as cofactor.

The carbon monoxide dehydrogenase (CODH) oxidizes carbon monoxide coupled, via CooF, to the reduction of a hydrogen cation by a hydrogenase (probably CooH). This Rhodospirillum rubrum protein is Carbon monoxide-induced hydrogenase (cooH).